The primary structure comprises 94 residues: CRISPR-associated endoribonuclease Cas2 (94 aa).

Asp10 contacts Mg(2+).

The protein belongs to the CRISPR-associated endoribonuclease Cas2 protein family. Homodimer, forms a heterotetramer with a Cas1 homodimer. Requires Mg(2+) as cofactor.

Functionally, CRISPR (clustered regularly interspaced short palindromic repeat), is an adaptive immune system that provides protection against mobile genetic elements (viruses, transposable elements and conjugative plasmids). CRISPR clusters contain sequences complementary to antecedent mobile elements and target invading nucleic acids. CRISPR clusters are transcribed and processed into CRISPR RNA (crRNA). Functions as a ssRNA-specific endoribonuclease. Involved in the integration of spacer DNA into the CRISPR cassette. The polypeptide is CRISPR-associated endoribonuclease Cas2 (Leptospira interrogans serogroup Icterohaemorrhagiae serovar Lai (strain 56601)).